The following is a 98-amino-acid chain: Secreted LysM effector Mgx1LysM (98 aa).

The N-terminal stretch at 1–18 (MKVTTIIAALLSVAVVDA) is a signal peptide. 2 disulfide bridges follow: Cys31–Cys89 and Cys62–Cys97. The region spanning 37 to 85 (IPYVVKKGDTLTHIAHDIYKRKVGICDLAYTNHIGKNPNLIYAGQTLLI) is the LysM domain. The chitin site is built by Gly44, Thr48, Asn75, and Ile77.

This sequence belongs to the secreted LysM effector family. Forms homodimers in a chitin-independent manner through interactions at the N-termini of Mgx1LysM monomers. Homodimers are further polymerized in a chitin-dependent manner.

It is found in the secreted. The protein localises to the cell wall. Secreted effector that enables the plant pathogenic fungus to manipulate host defenses for successful infection. Binds chitin and suppresses the chitin-induced reactive oxygen species (ROS) burst. Chitin-induced polymerization of homodimers forms a contiguous Mg1LysM highly oligomeric super-complexe that is anchored to the chitin in the fungal cell wall to prevent hydrolysis by host chitinases. The protein is Secreted LysM effector Mgx1LysM of Zymoseptoria tritici (strain ST99CH_3D7).